The sequence spans 490 residues: Aspartyl/glutamyl-tRNA(Asn/Gln) amidotransferase subunit B (490 aa).

The protein belongs to the GatB/GatE family. GatB subfamily. In terms of assembly, heterotrimer of A, B and C subunits.

The catalysed reaction is L-glutamyl-tRNA(Gln) + L-glutamine + ATP + H2O = L-glutaminyl-tRNA(Gln) + L-glutamate + ADP + phosphate + H(+). The enzyme catalyses L-aspartyl-tRNA(Asn) + L-glutamine + ATP + H2O = L-asparaginyl-tRNA(Asn) + L-glutamate + ADP + phosphate + 2 H(+). Its function is as follows. Allows the formation of correctly charged Asn-tRNA(Asn) or Gln-tRNA(Gln) through the transamidation of misacylated Asp-tRNA(Asn) or Glu-tRNA(Gln) in organisms which lack either or both of asparaginyl-tRNA or glutaminyl-tRNA synthetases. The reaction takes place in the presence of glutamine and ATP through an activated phospho-Asp-tRNA(Asn) or phospho-Glu-tRNA(Gln). The protein is Aspartyl/glutamyl-tRNA(Asn/Gln) amidotransferase subunit B of Zymomonas mobilis subsp. mobilis (strain ATCC 31821 / ZM4 / CP4).